Reading from the N-terminus, the 437-residue chain is uncharacterized protein (437 aa).

Over residues 63–87 the composition is skewed to polar residues; sequence PSSANVSFQNSDDNLSTSRGRSASP. 3 disordered regions span residues 63–97, 112–147, and 346–437; these read PSSA…SNFP, VKKD…KKET, and PKNA…YSIW. A compositionally biased stretch (polar residues) spans 399–409; it reads EALSPSKSNPD. Low complexity predominate over residues 425-437; the sequence is KKPSSSSSNYSIW.

This is an uncharacterized protein from Caenorhabditis elegans.